The following is a 327-amino-acid chain: ATP-dependent 6-phosphofructokinase (327 aa).

ATP-binding positions include Gly-11, 72–73 (RS), and 102–105 (GDGS). Asp-103 contacts Mg(2+). 127–129 (TID) is a substrate binding site. Asp-129 serves as the catalytic Proton acceptor. Arg-156 contributes to the ADP binding site. Substrate is bound by residues Arg-164 and 171 to 173 (MGR). 187–189 (GAE) provides a ligand contact to ADP. Substrate contacts are provided by residues Glu-224, Arg-245, and 251–254 (HIQR).

Belongs to the phosphofructokinase type A (PFKA) family. ATP-dependent PFK group I subfamily. Prokaryotic clade 'B1' sub-subfamily. In terms of assembly, homotetramer. Mg(2+) is required as a cofactor.

It localises to the cytoplasm. The enzyme catalyses beta-D-fructose 6-phosphate + ATP = beta-D-fructose 1,6-bisphosphate + ADP + H(+). The protein operates within carbohydrate degradation; glycolysis; D-glyceraldehyde 3-phosphate and glycerone phosphate from D-glucose: step 3/4. Allosterically activated by ADP and other diphosphonucleosides, and allosterically inhibited by phosphoenolpyruvate. Catalyzes the phosphorylation of D-fructose 6-phosphate to fructose 1,6-bisphosphate by ATP, the first committing step of glycolysis. This is ATP-dependent 6-phosphofructokinase from Sulfurovum sp. (strain NBC37-1).